The primary structure comprises 278 residues: MQKIKLKVSPFFKNLFGPPIEIEEAAGMVSHAANLFASVQLWECAGKAFFKSGDMLLQKNKNSIAAASSFVDAANAFKKIDSYEAINCLSKAIEVYTCLGKFYTVARCHMNIAAIYENDILELDKAIFHYENASGYYGGEGYNKLSDDCMLLIARLSIQKEDFDRAGKIFEQVGYNRMNTMLSKYESRHQLLYAIMCYLCSDVSRAKRSLDKYKDIFPAFKDFKECKFIEKILAACETKNIETFTSAIEEYDHGNTIDEALMSMLLTIRKATFEDEVE.

This sequence belongs to the SNAP family.

The sequence is that of Soluble NSF attachment protein homolog FPV011 from Fowlpox virus (strain NVSL) (FPV).